A 194-amino-acid polypeptide reads, in one-letter code: MRMKKSALTLAVLSSLFSGYSLAAPAENNTSQANLDFTGKVTASLCQVDTSNLSQTIDLGELSTSALKATGKGPAKSFAVNLINCDTTLNSIKYTIAGNNNTGSDTKYLVPASNDTSASGVGVYIQDNNAQAVEIGTEKTVPVVSNGGLALSDQSIPLQAYIGTTTGNPDTNGGVTAGTVTASAVMTIRSAGTP.

The signal sequence occupies residues 1–23 (MRMKKSALTLAVLSSLFSGYSLA). C46 and C85 are joined by a disulfide.

Belongs to the fimbrial protein family.

The protein resides in the fimbrium. The chain is Fimbrial protein 987P (fasA) from Escherichia coli.